Consider the following 345-residue polypeptide: Tetraacyldisaccharide 4'-kinase (345 aa).

Residue 54 to 61 (TLGGAGKT) participates in ATP binding.

This sequence belongs to the LpxK family.

The catalysed reaction is a lipid A disaccharide + ATP = a lipid IVA + ADP + H(+). Its pathway is glycolipid biosynthesis; lipid IV(A) biosynthesis; lipid IV(A) from (3R)-3-hydroxytetradecanoyl-[acyl-carrier-protein] and UDP-N-acetyl-alpha-D-glucosamine: step 6/6. Functionally, transfers the gamma-phosphate of ATP to the 4'-position of a tetraacyldisaccharide 1-phosphate intermediate (termed DS-1-P) to form tetraacyldisaccharide 1,4'-bis-phosphate (lipid IVA). The sequence is that of Tetraacyldisaccharide 4'-kinase from Allorhizobium ampelinum (strain ATCC BAA-846 / DSM 112012 / S4) (Agrobacterium vitis (strain S4)).